The sequence spans 277 residues: Ras suppressor protein 1 (277 aa).

The tract at residues 1-24 (MSKSLKKLVEESREKNQPEVDMSD) is disordered. The residue at position 2 (S2) is an N-acetylserine. Residues 7–24 (KLVEESREKNQPEVDMSD) show a composition bias toward basic and acidic residues. LRR repeat units lie at residues 41–63 (HITQ…AELK), 64–85 (NLEV…ISSL), 87–109 (KLKH…GSLP), 110–133 (ALEV…FFYL), 135–156 (TLRA…IGKL), 158–179 (KLQI…IGEL), and 181–202 (QLKE…LGNL). The segment at 250-277 (MQANPEPPKKNNDKSKKISRKPLAAKNR) is disordered. The segment covering 256–265 (PPKKNNDKSK) has biased composition (basic and acidic residues).

In terms of biological role, potentially plays a role in the Ras signal transduction pathway. Capable of suppressing v-Ras transformation in vitro. This is Ras suppressor protein 1 (RSU1) from Homo sapiens (Human).